A 412-amino-acid chain; its full sequence is MAEEKWVVMVTAQTPTNIAVIKYWGKRDEVRILPINDSISVTLDPDHLCTLTTVAVSPSFDRDRMWLNGKEISLSGSRYQNCLREIRSRADDVEDKEKGIKIAKKDWEKLHLHIASHNNFPTAAGLASSAAGFACLVFALAKLMNVNEDPSQLSAIARQGSGSACRSLFGGFVKWNMGNKEDGSDSVAVQLVDDKHWDDLVIIIAVVSSRQKETSSTSGMRESVETSLLLQHRAKEVVPVRILQMEEAIKNRDFTSFTKLTCSDSNQFHAVCMDTSPPIFYMNDTSHRIISLVEKWNRSAGTPEIAYTFDAGPNAVMIARNRKVAVELLQGLLYCFPPKPDTDMKSYVLGDTSIVKEAGLEGELPQGIKDKIGSQDQKGEVSYFICSRPGRGPVVLQDQTQALLHPQTGLPK.

Residue 23 to 26 (YWGK) participates in (R)-5-diphosphomevalonate binding. The Peroxisomal targeting signal PTS2 signature appears at 40 to 48 (SVTLDPDHL). (R)-5-diphosphomevalonate-binding positions include Arg78, 161–166 (SGSACR), and Thr217.

This sequence belongs to the diphosphomevalonate decarboxylase family. As to quaternary structure, homodimer.

The protein localises to the peroxisome. The catalysed reaction is (R)-5-diphosphomevalonate + ATP = isopentenyl diphosphate + ADP + phosphate + CO2. Its pathway is isoprenoid biosynthesis; isopentenyl diphosphate biosynthesis via mevalonate pathway; isopentenyl diphosphate from (R)-mevalonate: step 3/3. In terms of biological role, performs the first committed step in the biosynthesis of isoprene-containing compounds such as sterols and terpenoids. Is specific for (R)-5-diphosphomevalonate (MVAPP). The catalytic efficiency with (R)-5-phosphomevalonate (MVAP) as substrate is 10000-fold lower than for MVAPP. Can complement a yeast mutant defective in MVD activity. The polypeptide is Diphosphomevalonate decarboxylase MVD1, peroxisomal (Arabidopsis thaliana (Mouse-ear cress)).